The sequence spans 193 residues: Holliday junction branch migration complex subunit RuvA (193 aa).

A domain I region spans residues 1 to 64; it reads MIGRIAGILL…EDAHLLYGFL (64 aa). Residues 65-139 form a domain II region; sequence TPQERTTFRE…GKLGADLGAL (75 aa). The interval 139–143 is flexible linker; sequence LAGAA. Positions 144 to 193 are domain III; the sequence is SQSDHAADILNALVALGYSEKEGLAAIKNVPAGTGVSEGIKLALKALSKV.

The protein belongs to the RuvA family. In terms of assembly, homotetramer. Forms an RuvA(8)-RuvB(12)-Holliday junction (HJ) complex. HJ DNA is sandwiched between 2 RuvA tetramers; dsDNA enters through RuvA and exits via RuvB. An RuvB hexamer assembles on each DNA strand where it exits the tetramer. Each RuvB hexamer is contacted by two RuvA subunits (via domain III) on 2 adjacent RuvB subunits; this complex drives branch migration. In the full resolvosome a probable DNA-RuvA(4)-RuvB(12)-RuvC(2) complex forms which resolves the HJ.

It localises to the cytoplasm. Its function is as follows. The RuvA-RuvB-RuvC complex processes Holliday junction (HJ) DNA during genetic recombination and DNA repair, while the RuvA-RuvB complex plays an important role in the rescue of blocked DNA replication forks via replication fork reversal (RFR). RuvA specifically binds to HJ cruciform DNA, conferring on it an open structure. The RuvB hexamer acts as an ATP-dependent pump, pulling dsDNA into and through the RuvAB complex. HJ branch migration allows RuvC to scan DNA until it finds its consensus sequence, where it cleaves and resolves the cruciform DNA. In Burkholderia ambifaria (strain ATCC BAA-244 / DSM 16087 / CCUG 44356 / LMG 19182 / AMMD) (Burkholderia cepacia (strain AMMD)), this protein is Holliday junction branch migration complex subunit RuvA.